We begin with the raw amino-acid sequence, 278 residues long: Complement C1q tumor necrosis factor-related protein 6 (278 aa).

Positions 1–46 (MQWLRVRESPGEATGHRVTMGTAALGPVWAALLLFLLMCEIPMVEL) are cleaved as a signal peptide. A glycan (N-linked (GlcNAc...) asparagine) is linked at N91. The region spanning 97–138 (GDKGDPGPMGLPGYMGREGPQGEPGPQGSKGDKGEMGSPGAP) is the Collagen-like domain. The segment at 99 to 135 (KGDPGPMGLPGYMGREGPQGEPGPQGSKGDKGEMGSP) is disordered. The C1q domain occupies 139–259 (CQKRFFAFSV…KRQRENAIYS (121 aa)).

The protein localises to the secreted. This is Complement C1q tumor necrosis factor-related protein 6 (C1QTNF6) from Homo sapiens (Human).